Reading from the N-terminus, the 330-residue chain is Trans-1,2-dihydrobenzene-1,2-diol dehydrogenase (330 aa).

It belongs to the Gfo/Idh/MocA family. As to quaternary structure, homodimer.

It catalyses the reaction (1R,2R)-1,2-dihydrobenzene-1,2-diol + NADP(+) = catechol + NADPH + H(+). The enzyme catalyses D-xylose + NADP(+) = D-xylono-1,5-lactone + NADPH + H(+). The protein is Trans-1,2-dihydrobenzene-1,2-diol dehydrogenase (dhdh) of Xenopus laevis (African clawed frog).